The primary structure comprises 364 residues: tRNA 2-selenouridine synthase (364 aa).

The 124-residue stretch at 14–137 (LLADTPLIDV…LRQTAIQATW (124 aa)) folds into the Rhodanese domain. Catalysis depends on Cys97, which acts as the S-selanylcysteine intermediate.

Belongs to the SelU family. Monomer.

It carries out the reaction 5-methylaminomethyl-2-thiouridine(34) in tRNA + selenophosphate + (2E)-geranyl diphosphate + H2O + H(+) = 5-methylaminomethyl-2-selenouridine(34) in tRNA + (2E)-thiogeraniol + phosphate + diphosphate. It catalyses the reaction 5-methylaminomethyl-2-thiouridine(34) in tRNA + (2E)-geranyl diphosphate = 5-methylaminomethyl-S-(2E)-geranyl-thiouridine(34) in tRNA + diphosphate. The enzyme catalyses 5-methylaminomethyl-S-(2E)-geranyl-thiouridine(34) in tRNA + selenophosphate + H(+) = 5-methylaminomethyl-2-(Se-phospho)selenouridine(34) in tRNA + (2E)-thiogeraniol. The catalysed reaction is 5-methylaminomethyl-2-(Se-phospho)selenouridine(34) in tRNA + H2O = 5-methylaminomethyl-2-selenouridine(34) in tRNA + phosphate. Involved in the post-transcriptional modification of the uridine at the wobble position (U34) of tRNA(Lys), tRNA(Glu) and tRNA(Gln). Catalyzes the conversion of 2-thiouridine (S2U-RNA) to 2-selenouridine (Se2U-RNA). Acts in a two-step process involving geranylation of 2-thiouridine (S2U) to S-geranyl-2-thiouridine (geS2U) and subsequent selenation of the latter derivative to 2-selenouridine (Se2U) in the tRNA chain. In Salmonella enteritidis, this protein is tRNA 2-selenouridine synthase.